Consider the following 565-residue polypeptide: E3 ubiquitin-protein ligase ipaH7.8 (565 aa).

A disordered region spans residues Met-1–Thr-22. The interaction with target proteins stretch occupies residues Met-1 to Met-262. Over residues Ser-9–Thr-22 the composition is skewed to low complexity. 9 LRR repeats span residues Gln-58–Ile-79, Ser-80–Ala-97, Phe-98–Leu-119, Thr-120–Asn-137, His-138–Glu-157, Lys-158–Leu-179, Glu-180–Asn-199, Arg-202–Leu-223, and Ser-225–Thr-248. The linker stretch occupies residues Ser-263–Leu-270. The interval His-271–Ser-565 is E3 ubiquitin-protein ligase catalytic domain. Residues Pro-273–Ser-565 form the NEL domain. Catalysis depends on Cys-357, which acts as the Glycyl thioester intermediate.

This sequence belongs to the LRR-containing bacterial E3 ligase family. In terms of processing, ubiquitinated in the presence of host E1 ubiquitin-activating enzyme, E2 ubiquitin-conjugating enzyme and ubiquitin.

Its subcellular location is the secreted. The protein resides in the host cytoplasm. It catalyses the reaction S-ubiquitinyl-[E2 ubiquitin-conjugating enzyme]-L-cysteine + [acceptor protein]-L-lysine = [E2 ubiquitin-conjugating enzyme]-L-cysteine + N(6)-ubiquitinyl-[acceptor protein]-L-lysine.. The protein operates within protein modification; protein ubiquitination. E3 ubiquitin ligase effector protein that interferes with host's innate immunity. Functions to alter host cell physiology and promote bacterial survival in host tissues. Catalyzes ubiquitination of human gasdermins GSDMB and GSDMD, promoting their degradation by the proteasome, thereby preventing cell death. In contrast, activates host cell pyroptosis in mouse cells: catalyzes ubiquitination of mouse Nlrp1b allele 1 protein, releasing the cleaved C-terminal part of Nlrp1b, which polymerizes and forms the Nlrp1b inflammasome followed by host cell pyroptosis. Does not catalyze ubiquitination of mouse GSDMD. The sequence is that of E3 ubiquitin-protein ligase ipaH7.8 from Shigella flexneri.